The following is a 299-amino-acid chain: ATP phosphoribosyltransferase (299 aa).

The protein belongs to the ATP phosphoribosyltransferase family. Long subfamily. As to quaternary structure, equilibrium between an active dimeric form, an inactive hexameric form and higher aggregates. Interconversion between the various forms is largely reversible and is influenced by the natural substrates and inhibitors of the enzyme. Requires Mg(2+) as cofactor.

The protein resides in the cytoplasm. The enzyme catalyses 1-(5-phospho-beta-D-ribosyl)-ATP + diphosphate = 5-phospho-alpha-D-ribose 1-diphosphate + ATP. Its pathway is amino-acid biosynthesis; L-histidine biosynthesis; L-histidine from 5-phospho-alpha-D-ribose 1-diphosphate: step 1/9. Feedback inhibited by histidine. Catalyzes the condensation of ATP and 5-phosphoribose 1-diphosphate to form N'-(5'-phosphoribosyl)-ATP (PR-ATP). Has a crucial role in the pathway because the rate of histidine biosynthesis seems to be controlled primarily by regulation of HisG enzymatic activity. The protein is ATP phosphoribosyltransferase of Buchnera aphidicola subsp. Melaphis rhois.